The primary structure comprises 808 residues: Digalactosyldiacylglycerol synthase 1, chloroplastic (808 aa).

The segment at 1-23 is disordered; the sequence is MVKETLIPPSSTSMTTGTSSSSS. A chloroplast-targeting transit peptide spans 1–58; sequence MVKETLIPPSSTSMTTGTSSSSSLSMTLSSTNALSFLSKGWREVWDSADADLQLMRDR. Residues 10 to 23 are compositionally biased toward low complexity; the sequence is SSTSMTTGTSSSSS.

The protein belongs to the glycosyltransferase group 1 family. Glycosyltransferase 4 subfamily.

It is found in the plastid. The protein resides in the chloroplast outer membrane. The enzyme catalyses a 1,2-diacyl-3-O-(beta-D-galactosyl)-sn-glycerol + UDP-alpha-D-galactose = a 1,2-diacyl-3-O-[alpha-D-galactosyl-(1-&gt;6)-beta-D-galactosyl]-sn-glycerol + UDP + H(+). Its function is as follows. Involved in the synthesis of diacylglycerol galactolipids that are specifically found in thylakoid membranes. Specific for alpha-glycosidic linkages. Responsible for the final assembly of galactolipids in photosynthetic membranes. Digalactosyldiacylglycerol (DGDG) provides stability to the photosystem I (PSI) complex, especially to the PsaA, PsaB, PsaC, PsaL and PsaH subunits. The chain is Digalactosyldiacylglycerol synthase 1, chloroplastic from Arabidopsis thaliana (Mouse-ear cress).